Consider the following 330-residue polypeptide: G-protein coupled receptor 157 (330 aa).

Residues 1 to 15 lie on the Extracellular side of the membrane; sequence MPSPAPPTELLPWER. A helical membrane pass occupies residues 16-36; the sequence is AVVLLSCALSALGSGLLVATH. Over 37–48 the chain is Cytoplasmic; sequence ALWPDLRSRARR. Residues 49 to 69 traverse the membrane as a helical segment; the sequence is LLLFLSLADLLSAASYFYGVL. The Extracellular portion of the chain corresponds to 70–87; the sequence is QDFAGTSWDCVLQGALST. Residues 88 to 108 form a helical membrane-spanning segment; that stretch reads FANTSSFFWTVAIALYLYLSI. Residues 109 to 119 lie on the Cytoplasmic side of the membrane; it reads VRTTRGPSTDH. A helical membrane pass occupies residues 120–140; it reads LIWAFHLISWGVPLAITVAAV. Topologically, residues 141–166 are extracellular; it reads SLKKIGYDASDVSVGWCWINLEAEDR. A helical transmembrane segment spans residues 167 to 187; that stretch reads VLWMLLTGKLWEMLAYILLPL. Topologically, residues 188 to 227 are cytoplasmic; that stretch reads LYLLVRKHINRAHQALSEYRPICEGRQLQRGSSTSTADKK. Residues 228–248 traverse the membrane as a helical segment; sequence LVLIPLIFICLRVWSTVRFVL. The Extracellular portion of the chain corresponds to 249-259; the sequence is TLCGSPAVQTP. The chain crosses the membrane as a helical span at residues 260-280; it reads VLVVLHGIGNTFQGGANCIMF. Residues 281-330 lie on the Cytoplasmic side of the membrane; the sequence is VLCTRAVRTRLFSLCCCCPRPSTQSPPGAPTPPKIGESQESRRTPEVPST. The tract at residues 301–330 is disordered; sequence PSTQSPPGAPTPPKIGESQESRRTPEVPST. A compositionally biased stretch (basic and acidic residues) spans 317–330; the sequence is ESQESRRTPEVPST.

It belongs to the G-protein coupled receptor 2 family. In terms of tissue distribution, expressed in the primary cilia of radial glial progenitors (RGPs) in the developing neocortex.

It localises to the cell projection. It is found in the cilium membrane. Orphan receptor that promotes neuronal differentiation of radial glial progenitors (RGPs). The activity of this receptor is mediated by a G(q)-protein that activates a phosphatidylinositol-calcium second messenger. The polypeptide is G-protein coupled receptor 157 (Gpr157) (Mus musculus (Mouse)).